Reading from the N-terminus, the 410-residue chain is MSESVIQGSNPDRVLSPTSSKSVTQTVNGSHQFVIQGYSLAKGMGIGKHIASDNFSVGGYQWGIFFYPDGKNPEDNSSYVSVFIALASEGTEVRALFELALVDQSGKGKHKVHSHFERSLDGGPYTLKYRGSMWGYKRFFRRSILETSDYLKDDCLIINCTVGVVVSEILCPQLHSVHVPDSELGSHFGVLLDSMEGSDITFNIAGEKFLAHKLVLAARSPFFKSKFFSEFEANNTEVTINDLEPKVFKALLQFMYKDSLPEDVEPATAHTFERLKLSEIYETLIVKVLAAADKYDLIRLRLLCESHICKGVSVKSVAKILALADRYNAKELKGVCLKFTAENLAAVLETDAYQQMKDECVTLQSELLKAVAGHEEGSNSTGGAKSQSVWAQLSDGGGDTTSRHVRQRTT.

The interval 1–24 (MSESVIQGSNPDRVLSPTSSKSVT) is disordered. The MATH domain occupies 28 to 162 (NGSHQFVIQG…DDCLIINCTV (135 aa)). Residues 198–264 (SDITFNIAGE…MYKDSLPEDV (67 aa)) enclose the BTB domain.

It belongs to the Tdpoz family. Heterodimer with BPM1 and BPM3. Interacts with RAP2-4. Binds to MYB56 at the promoter of FLOWERING LOCUS T (FT). Ubiquitous.

It localises to the nucleus. Its subcellular location is the cytoplasm. Its pathway is protein modification; protein ubiquitination. Functionally, may act as a substrate-specific adapter of an E3 ubiquitin-protein ligase complex (CUL3-RBX1-BTB) which mediates the ubiquitination and subsequent proteasomal degradation of target proteins. This chain is BTB/POZ and MATH domain-containing protein 5 (BPM5), found in Arabidopsis thaliana (Mouse-ear cress).